A 568-amino-acid polypeptide reads, in one-letter code: Putative ABC transporter ATP-binding protein EF_2153 (568 aa).

2 ABC transporter domains span residues 6–247 (ITFN…GIRE) and 301–535 (LRLE…ASLK). Residues 40-47 (GPSGSGKS) and 335-342 (GKNGAGKS) contribute to the ATP site.

Belongs to the ABC transporter superfamily.

The protein resides in the cell membrane. In terms of biological role, probably part of an ABC transporter complex. Responsible for energy coupling to the transport system. The chain is Putative ABC transporter ATP-binding protein EF_2153 from Enterococcus faecalis (strain ATCC 700802 / V583).